Here is a 211-residue protein sequence, read N- to C-terminus: Large ribosomal subunit protein uL3 (211 aa).

Belongs to the universal ribosomal protein uL3 family. Part of the 50S ribosomal subunit. Forms a cluster with proteins L14 and L19.

Functionally, one of the primary rRNA binding proteins, it binds directly near the 3'-end of the 23S rRNA, where it nucleates assembly of the 50S subunit. This is Large ribosomal subunit protein uL3 from Geobacter sp. (strain M21).